The following is a 323-amino-acid chain: ComG operon protein 2 (323 aa).

The next 3 helical transmembrane spans lie at 93–113, 143–163, and 296–316; these read YPLFLIFTVAVMFYMLQSIII, LVIILLVLFTAGIGIYYWLVF, and MIYGFVAAMILLVYLSMLVPM.

The protein belongs to the GSP F family.

It localises to the cell membrane. Its function is as follows. Required for transformation and DNA binding. This Bacillus subtilis (strain 168) protein is ComG operon protein 2 (comGB).